We begin with the raw amino-acid sequence, 518 residues long: Cytochrome P450 CYP72A219 (518 aa).

Residues 2–22 form a helical membrane-spanning segment; sequence ELVLKLISSFCAIVVVILLGW. Residue Cys465 coordinates heme.

It belongs to the cytochrome P450 family. Heme is required as a cofactor.

It is found in the membrane. Functionally, probable heme-thiolate monooxygenase. The polypeptide is Cytochrome P450 CYP72A219 (Panax ginseng (Korean ginseng)).